A 46-amino-acid chain; its full sequence is Probable butyrate kinase (46 aa).

Belongs to the acetokinase family.

The protein localises to the cytoplasm. It carries out the reaction butanoate + ATP = butanoyl phosphate + ADP. This is Probable butyrate kinase (buk) from Geobacillus stearothermophilus (Bacillus stearothermophilus).